Here is a 414-residue protein sequence, read N- to C-terminus: ORC1-type DNA replication protein 1 (414 aa).

ATP is bound by residues 70–74, Y213, and R225; that span reads TGKTA.

It belongs to the CDC6/cdc18 family.

Its function is as follows. Involved in regulation of DNA replication. In Methanosarcina mazei (strain ATCC BAA-159 / DSM 3647 / Goe1 / Go1 / JCM 11833 / OCM 88) (Methanosarcina frisia), this protein is ORC1-type DNA replication protein 1 (cdc6-1).